Consider the following 428-residue polypeptide: Divalent metal cation transporter MntH (428 aa).

Transmembrane regions (helical) follow at residues 33–53 (WYLL…GNVA), 60–80 (AQFG…AALV), 114–134 (QAEI…AIAL), 136–156 (IMFN…SLLL), 171–191 (VITA…FVVT), 210–230 (SVLL…VYLH), 258–278 (VGLA…VAAL), 299–319 (TLGA…GLAS), 334–356 (LLHW…LAIL), 365–385 (TLVL…LPLV), and 406–426 (VGWV…YLTV).

This sequence belongs to the NRAMP family.

Its subcellular location is the cell membrane. In terms of biological role, h(+)-stimulated, divalent metal cation uptake system. Transports zinc and iron. Can also interact with manganese and copper. This chain is Divalent metal cation transporter MntH, found in Mycobacterium tuberculosis (strain CDC 1551 / Oshkosh).